The primary structure comprises 491 residues: Probable glycine dehydrogenase (decarboxylating) subunit 2 (491 aa).

The residue at position 273 (K273) is an N6-(pyridoxal phosphate)lysine.

The protein belongs to the GcvP family. C-terminal subunit subfamily. In terms of assembly, the glycine cleavage system is composed of four proteins: P, T, L and H. In this organism, the P 'protein' is a heterodimer of two subunits. Pyridoxal 5'-phosphate serves as cofactor.

It catalyses the reaction N(6)-[(R)-lipoyl]-L-lysyl-[glycine-cleavage complex H protein] + glycine + H(+) = N(6)-[(R)-S(8)-aminomethyldihydrolipoyl]-L-lysyl-[glycine-cleavage complex H protein] + CO2. The glycine cleavage system catalyzes the degradation of glycine. The P protein binds the alpha-amino group of glycine through its pyridoxal phosphate cofactor; CO(2) is released and the remaining methylamine moiety is then transferred to the lipoamide cofactor of the H protein. This chain is Probable glycine dehydrogenase (decarboxylating) subunit 2, found in Bacillus cereus (strain B4264).